We begin with the raw amino-acid sequence, 1382 residues long: ABC-type transporter atr1 (1382 aa).

Basic and acidic residues predominate over residues 1-12 (MRFRSDSRADHQ). The interval 1-56 (MRFRSDSRADHQHPKKQGSMDPDTIQALKYQDRSSSSSSNNKPKEKVGSASTSPSP) is disordered. A glycan (N-linked (GlcNAc...) asparagine) is linked at N62. The next 6 membrane-spanning stretches (helical) occupy residues 101–121 (LFGT…NIFI), 159–179 (LILL…MAVF), 233–253 (LPMA…AFAF), 259–279 (LVLL…GALT), 339–359 (GVGV…AFFY), and 374–394 (IVSV…LFSM). The 300-residue stretch at 101–400 (LFGTGMAIAA…LFSMIENFTM (300 aa)) folds into the ABC transmembrane type-1 1 domain. N-linked (GlcNAc...) asparagine glycosylation is present at N397. The ABC transporter 1 domain occupies 445–688 (LKLDHVHFAY…PNGTFASMLR (244 aa)). 480–487 (GLSGSGKS) serves as a coordination point for ATP. N680 is a glycosylation site (N-linked (GlcNAc...) asparagine). The disordered stretch occupies residues 738 to 768 (SVKPKDPSKNFEPPGESYASPAADGVKQDAP). The 298-residue stretch at 797–1094 (LGSLCAAIIG…IFNYSADFSS (298 aa)) folds into the ABC transmembrane type-1 2 domain. Residues 800–820 (LCAAIIGAVYPVYAILFGTAI) form a helical membrane-spanning segment. Residue N827 is glycosylated (N-linked (GlcNAc...) asparagine). The chain crosses the membrane as a helical span at residues 848–868 (ISSGSFFIVAVGCAFISFYHV). An N-linked (GlcNAc...) asparagine glycan is attached at N903. Transmembrane regions (helical) follow at residues 911-931 (SLSV…GSIV) and 951-973 (LALV…LRVL). Residue N1020 is glycosylated (N-linked (GlcNAc...) asparagine). 2 helical membrane passes run 1034–1054 (VLFG…FWYG) and 1067–1087 (GFFT…NIFN). The ABC transporter 2 domain maps to 1136–1377 (IALKEVTFRY…DGLFALMARL (242 aa)). 1171–1178 (GGSGSGKS) contacts ATP. N1324 is a glycosylation site (N-linked (GlcNAc...) asparagine).

This sequence belongs to the ABC transporter superfamily. ABCB family. Multidrug resistance exporter (TC 3.A.1.201) subfamily.

Its subcellular location is the cell membrane. Functionally, ABC-type transporter; part of the gene cluster that mediates the biosynthesis of the glycolipid biosurfactant ustilagic acid (UA). UA is a secreted cellobiose glycolipid that is toxic for many microorganisms and confers biocontrol activity to U.maydis. Export of UA is presumably catalyzed by the ABC transporter atr1. Atr1 appears to be quite unspecific, as many of the UA derivatives produced by cluster mutant strains are readily exported. This chain is ABC-type transporter atr1, found in Mycosarcoma maydis (Corn smut fungus).